A 70-amino-acid chain; its full sequence is Conotoxin Ep11.12 (70 aa).

The signal sequence occupies residues 1 to 26 (MMFRVTSVGCFLLVILSLNLVVLTNA). 4 disulfides stabilise this stretch: Cys-27–Cys-41, Cys-34–Cys-46, Cys-40–Cys-50, and Cys-45–Cys-54. Pro-57 carries the proline amide modification. Residues 61–70 (AKLREFFRQR) constitute a propeptide that is removed on maturation.

Belongs to the conotoxin I2 superfamily. Expressed by the venom duct.

It localises to the secreted. This Conus episcopatus (Bishop's cone) protein is Conotoxin Ep11.12.